The sequence spans 135 residues: Interleukin-4 (135 aa).

An N-terminal signal peptide occupies residues 1–24 (MGLTYQLIPVLVCLLVCTSHFVHG). 3 disulfide bridges follow: C27/C135, C48/C85, and C70/C105. A glycan (N-linked (GlcNAc...) asparagine) is linked at N62.

The protein belongs to the IL-4/IL-13 family.

The protein resides in the secreted. Functionally, participates in at least several B-cell activation processes as well as of other cell types. It is a costimulator of DNA-synthesis. It induces the expression of class II MHC molecules on resting B-cells. It enhances both secretion and cell surface expression of IgE and IgG1. It also regulates the expression of the low affinity Fc receptor for IgE (CD23) on both lymphocytes and monocytes. Positively regulates IL31RA expression in macrophages. Stimulates autophagy in dendritic cells by interfering with mTORC1 signaling and through the induction of RUFY4. This chain is Interleukin-4 (IL4), found in Bubalus carabanensis (Swamp type water buffalo).